The primary structure comprises 98 residues: Small ribosomal subunit protein bS20 (98 aa).

A compositionally biased stretch (basic residues) spans 1–12 (MAPRKPSKKVGP). The tract at residues 1 to 34 (MAPRKPSKKVGPQKRPSAEKRVITSKKKQLRNQS) is disordered.

It belongs to the bacterial ribosomal protein bS20 family.

Its function is as follows. Binds directly to 16S ribosomal RNA. This is Small ribosomal subunit protein bS20 from Chlamydia muridarum (strain MoPn / Nigg).